The sequence spans 278 residues: HTH-type transcriptional activator RhaS (278 aa).

The HTH araC/xylS-type domain maps to Asn174–Gly272. 2 DNA-binding regions (H-T-H motif) span residues Asp191–Thr212 and Val239–Phe262.

In terms of assembly, binds DNA as a dimer.

Its subcellular location is the cytoplasm. Functionally, activates expression of the rhaBAD and rhaT operons. This Escherichia coli (strain SMS-3-5 / SECEC) protein is HTH-type transcriptional activator RhaS.